We begin with the raw amino-acid sequence, 1365 residues long: MSSSFFNPSFAFSSHFDPDGAPLSELSWSSSLAVVAVSFSGIFTVVILMLACLCCKKGGIGFKEFENAEGDEYVADFSEQGSPAAAAQTGPDVYVLPLTEVSLPMAKQPGRSVQLLKSTDLGRHSLLYLKEIGHGWFGKVFLGEVHSGVSGTQVVVKELKVSASVQEQMQFLEEAQPYRALQHSNLLQCLAQCAEVTPYLLVMEFCPLGDLKGYLRSCRVTESMAPDPLTLQRMACEVACGVLHLHRHNYVHSDLALRNCLLTADLTVKVGDYGLSHCKYREDYLVTADQLWVPLRWIAPELVDEVHGNLLVVDQTKSSNVWSLGVTIWELFELGAQPYPQHSDRQVLAYAVREQQLKLPKPQLQLALSDRWYEVMQFCWLQPEQRPTAEEVHLLLSYLCAKGTTELEEEFERRWRSLRPGGSTGLGSGSAAPAAATAASAELTAASSFPLLERFTSDGFHVDSDDVLTVTETSHGLNFEYKWEAGCGAEEYPPSGAASSPGSAARLQELCAPDSSPPGVVPVLSAHSPSVGSEYFIRLEGAVPAAGHDPDCAGCAPSPQAVTDQDNNSEESTVASLAMEPLLGHAPPTEGLWGPCDHHSHRRQGSPCPSRSPSPGTPMLPAEDIDWGVATFCPPFFDDPLGASPSGSPGAQPSPSDEEPEEGKVGLAAQCGHWSSNMSANNNSASRDPESWDPGYVSSFTDSYRDDCSSLEQTPRASPEVGHLLSQEDPRDFLPGLVAVSPGQEPSRPFNLLPLCPAKGLAPAACLITSPWTEGAVGGAENPIVEPKLAQEAEGSAEPQLPLPSVPSPSCEGASLPSEEASAPDILPASPTPAAGSWVTVPEPAPTLESSGSSLGQEAPSSEDEDTTEATSGVFTDLSSDGPHTEKSGIVPALRSLQKQVGTPDSLDSLDIPSSASDGGCEVLSPSAAGPPGGQPRAVDSGYDTENYESPEFVLKEAHESSEPEAFGEPASEGESPGPDPLLSVSLGGLSKKSPYRDSAYFSDLDAESEPTFGPEKHSGIQDSQKEQDLRSPPSPGHQSVQAFPRSAVSSEVLSPPQQSEEPLPEVPRPEPLGAQGPVGVQPVPGPSHSKCFPLTSVPLISEGSGTEPQGPSGQLSGRAQQGQMGNPSTPRSPLCLALPGHPGALEGRPEEDEDTEDSEESDEELRCYSVQEPSEDSEEEPPAVPVVVAESQSARNLRSLLKMPSLLSEAFCDDLERKKKAVSFFDDVTVYLFDQESPTRETGEPFPSTKESLPTFLEGGPSSPSATGLPLRAGHSPDSSAPEPGSRFEWDGDFPLVPGKAALVTELDPADPVLAAPPTPAAPFSRFTVSPTPASRFSITHISDSDAQSVGGPAAGAGGRYTEA.

A helical membrane pass occupies residues 32 to 52; that stretch reads LAVVAVSFSGIFTVVILMLAC. One can recognise a Protein kinase domain in the interval 126 to 396; that stretch reads LLYLKEIGHG…PTAEEVHLLL (271 aa). ATP contacts are provided by residues 132 to 140 and lysine 157; that span reads IGHGWFGKV. The Proton acceptor role is filled by aspartate 254. Position 500 is a phosphoserine (serine 500). Disordered regions lie at residues 550–623, 638–698, 791–1186, 1237–1293, and 1343–1365; these read PDCA…LPAE, DDPL…GYVS, QEAE…PAVP, ESPT…EWDG, and ISDS…YTEA. Over residues 560–575 the composition is skewed to polar residues; the sequence is QAVTDQDNNSEESTVA. 2 stretches are compositionally biased toward low complexity: residues 638–655 and 675–686; these read DDPL…QPSP and SSNMSANNNSAS. Polar residues-rich tracts occupy residues 848–860 and 869–879; these read LESS…QEAP and EATSGVFTDLS. Composition is skewed to low complexity over residues 904 to 918 and 981 to 993; these read PDSL…SASD and PLLS…LSKK. Residues 1015–1030 are compositionally biased toward basic and acidic residues; the sequence is PEKHSGIQDSQKEQDL. A Phosphoserine modification is found at serine 1035. The segment covering 1037–1053 has biased composition (polar residues); the sequence is GHQSVQAFPRSAVSSEV. Positions 1072–1083 are enriched in low complexity; sequence PLGAQGPVGVQP. Positions 1104–1132 are enriched in polar residues; it reads GSGTEPQGPSGQLSGRAQQGQMGNPSTPR. The span at 1150 to 1164 shows a compositional bias: acidic residues; that stretch reads PEEDEDTEDSEESDE. Threonine 1156 is modified (phosphothreonine). A phosphoserine mark is found at serine 1159, serine 1162, serine 1175, serine 1178, and serine 1253. Positions 1354 to 1365 are enriched in gly residues; it reads PAAGAGGRYTEA.

This sequence belongs to the protein kinase superfamily. Tyr protein kinase family. As to quaternary structure, interacts with CDK5. Post-translationally, autophosphorylated. Phosphorylated by CDK5. As to expression, expressed in brain, and, to a lower extent, in kidney, heart, lung and skeletal muscle. In the brain, expressed in the olfactory bulb, cerebellum, striatum, hippocampal formation, thalamus, hypothalamus, and pontine nuclei (at protein level).

The protein resides in the membrane. The protein localises to the cytoplasm. It is found in the perinuclear region. It localises to the cell projection. Its subcellular location is the dendrite. The protein resides in the axon. The protein localises to the growth cone. It catalyses the reaction L-seryl-[protein] + ATP = O-phospho-L-seryl-[protein] + ADP + H(+). It carries out the reaction L-threonyl-[protein] + ATP = O-phospho-L-threonyl-[protein] + ADP + H(+). In terms of biological role, may be involved in neuronal differentiation. The chain is Serine/threonine-protein kinase LMTK1 (Aatk) from Mus musculus (Mouse).